The primary structure comprises 204 residues: Lymphotoxin-alpha (204 aa).

The N-terminal stretch at 1–33 is a signal peptide; that stretch reads MTPPGRLYLLRVRSAPVLLLLGLLLGLPPGAQG. The 143-residue stretch at 62–204 folds into the THD domain; that stretch reads PAAHLIGDPS…SSVFFGAFAL (143 aa). The N-linked (GlcNAc...) asparagine glycan is linked to N95. Cysteines 119 and 155 form a disulfide.

It belongs to the tumor necrosis factor family. In terms of assembly, homotrimer, and heterotrimer of either two LTB and one LTA subunits or (less prevalent) two LTA and one LTB subunits. Interacts with TNFRSF14.

The protein localises to the secreted. Its subcellular location is the membrane. Functionally, cytokine that in its homotrimeric form binds to TNFRSF1A/TNFR1, TNFRSF1B/TNFBR and TNFRSF14/HVEM. In its heterotrimeric form with LTB binds to TNFRSF3/LTBR. Lymphotoxin is produced by lymphocytes and is cytotoxic for a wide range of tumor cells in vitro and in vivo. This chain is Lymphotoxin-alpha (LTA), found in Canis lupus familiaris (Dog).